An 86-amino-acid chain; its full sequence is Cytochrome c oxidase subunit 6B1 (86 aa).

Alanine 2 carries the post-translational modification N-acetylalanine. A CHCH domain is found at 27–73; sequence TRNCWQNYLDFHRCQKAMTAKGGDISVCEWYQRVYQSLCPTSWVTDW. Residues 30 to 40 carry the Cx9C motif motif; that stretch reads CWQNYLDFHRC. Cystine bridges form between cysteine 30/cysteine 65 and cysteine 40/cysteine 54. Positions 54-65 match the Cx10C motif motif; the sequence is CEWYQRVYQSLC.

This sequence belongs to the cytochrome c oxidase subunit 6B family. Component of the cytochrome c oxidase (complex IV, CIV), a multisubunit enzyme composed of 14 subunits. The complex is composed of a catalytic core of 3 subunits MT-CO1, MT-CO2 and MT-CO3, encoded in the mitochondrial DNA, and 11 supernumerary subunits COX4I1 (or COX4I2), COX5A, COX5B, COX6A1 (or COX6A2), COX6B1 (or COX6B2), COX6C, COX7A2 (or COX7A1), COX7B, COX7C, COX8A and NDUFA4, which are encoded in the nuclear genome. The complex exists as a monomer or a dimer and forms supercomplexes (SCs) in the inner mitochondrial membrane with NADH-ubiquinone oxidoreductase (complex I, CI) and ubiquinol-cytochrome c oxidoreductase (cytochrome b-c1 complex, complex III, CIII), resulting in different assemblies (supercomplex SCI(1)III(2)IV(1) and megacomplex MCI(2)III(2)IV(2)).

It is found in the mitochondrion inner membrane. It functions in the pathway energy metabolism; oxidative phosphorylation. In terms of biological role, component of the cytochrome c oxidase, the last enzyme in the mitochondrial electron transport chain which drives oxidative phosphorylation. The respiratory chain contains 3 multisubunit complexes succinate dehydrogenase (complex II, CII), ubiquinol-cytochrome c oxidoreductase (cytochrome b-c1 complex, complex III, CIII) and cytochrome c oxidase (complex IV, CIV), that cooperate to transfer electrons derived from NADH and succinate to molecular oxygen, creating an electrochemical gradient over the inner membrane that drives transmembrane transport and the ATP synthase. Cytochrome c oxidase is the component of the respiratory chain that catalyzes the reduction of oxygen to water. Electrons originating from reduced cytochrome c in the intermembrane space (IMS) are transferred via the dinuclear copper A center (CU(A)) of subunit 2 and heme A of subunit 1 to the active site in subunit 1, a binuclear center (BNC) formed by heme A3 and copper B (CU(B)). The BNC reduces molecular oxygen to 2 water molecules using 4 electrons from cytochrome c in the IMS and 4 protons from the mitochondrial matrix. The sequence is that of Cytochrome c oxidase subunit 6B1 (COX6B1) from Homo sapiens (Human).